The primary structure comprises 297 residues: Acetyl-coenzyme A carboxylase carboxyl transferase subunit beta (297 aa).

The 270-residue stretch at 25–294 (LWVKCPETGQ…LPPKGRLPRP (270 aa)) folds into the CoA carboxyltransferase N-terminal domain.

It belongs to the AccD/PCCB family. Acetyl-CoA carboxylase is a heterohexamer composed of biotin carboxyl carrier protein (AccB), biotin carboxylase (AccC) and two subunits each of ACCase subunit alpha (AccA) and ACCase subunit beta (AccD).

Its subcellular location is the cytoplasm. It carries out the reaction N(6)-carboxybiotinyl-L-lysyl-[protein] + acetyl-CoA = N(6)-biotinyl-L-lysyl-[protein] + malonyl-CoA. The protein operates within lipid metabolism; malonyl-CoA biosynthesis; malonyl-CoA from acetyl-CoA: step 1/1. Component of the acetyl coenzyme A carboxylase (ACC) complex. Biotin carboxylase (BC) catalyzes the carboxylation of biotin on its carrier protein (BCCP) and then the CO(2) group is transferred by the transcarboxylase to acetyl-CoA to form malonyl-CoA. The protein is Acetyl-coenzyme A carboxylase carboxyl transferase subunit beta of Xanthobacter autotrophicus (strain ATCC BAA-1158 / Py2).